A 616-amino-acid polypeptide reads, in one-letter code: 2-isopropylmalate synthase (616 aa).

The tract at residues 1–34 (MSPNDAFISAPAKIETPVGPRNEGQPAWNKQRGS) is disordered. In terms of domain architecture, Pyruvate carboxyltransferase spans 67–341 (PQWCAVDLRD…DPQLDFTDIR (275 aa)). Mg(2+)-binding residues include aspartate 76, histidine 280, histidine 282, and asparagine 316. A regulatory domain region spans residues 490–616 (RTAPVEQIAL…NHEAVLAGGV (127 aa)).

The protein belongs to the alpha-IPM synthase/homocitrate synthase family. LeuA type 2 subfamily. In terms of assembly, homodimer. Mg(2+) is required as a cofactor.

It localises to the cytoplasm. The enzyme catalyses 3-methyl-2-oxobutanoate + acetyl-CoA + H2O = (2S)-2-isopropylmalate + CoA + H(+). Its pathway is amino-acid biosynthesis; L-leucine biosynthesis; L-leucine from 3-methyl-2-oxobutanoate: step 1/4. With respect to regulation, inhibited by L-leucine, the pathway end product. Catalyzes the condensation of the acetyl group of acetyl-CoA with 3-methyl-2-oxobutanoate (2-ketoisovalerate) to form 3-carboxy-3-hydroxy-4-methylpentanoate (2-isopropylmalate). Complements an E.coli leuA deletion. This is 2-isopropylmalate synthase from Corynebacterium glutamicum (strain ATCC 13032 / DSM 20300 / JCM 1318 / BCRC 11384 / CCUG 27702 / LMG 3730 / NBRC 12168 / NCIMB 10025 / NRRL B-2784 / 534).